Consider the following 494-residue polypeptide: MDGSGERSLPEPGSQSSAASDDIEIVVNVGGVRQVLYGDLLSQYPETRLAELINCLAGGYDTIFSLCDDYDPGKREFYFDRDPDAFKCVIEVYYFGEVHMKKGICPICFKNEMDFWKVDLKFLDDCCKSHLSEKREELEEIARRVQLILDDLGVDAAEGRWRRCQKCVWKFLEKPESSCPARVVAVLSFLLILVSSVVMCMGTIPELQVLDAEGNRVEHPTLENVETACIGWFTLEYLLRLFSSPNKLHFALSFMNIVDVLAILPFYVSLTLTHLGARMMELTNVQQAVQALRIMRIARIFKLARHSSGLQTLTYALKRSFKELGLLLMYLAVGIFVFSALGYTMEQSHPETLFKSIPQSFWWAIITMTTVGYGDIYPKTTLGKLNAAISFLCGVIAIALPIHPIINNFVRYYNKQRVLETAAKHELELMELNSSSGGEGKTGGSRSDLDNLPPEPAGKEAPSCSSRLKLSHSDTFIPLLTEEKHHRTRLQSCK.

Over 1–183 (MDGSGERSLP…KPESSCPARV (183 aa)) the chain is Cytoplasmic. Residues 184–204 (VAVLSFLLILVSSVVMCMGTI) traverse the membrane as a helical segment. Residues 224–244 (NVETACIGWFTLEYLLRLFSS) traverse the membrane as a helical segment. Over 245-249 (PNKLH) the chain is Cytoplasmic. The helical transmembrane segment at 250–270 (FALSFMNIVDVLAILPFYVSL) threads the bilayer. A helical; Voltage-sensor transmembrane segment spans residues 290-310 (QALRIMRIARIFKLARHSSGL). Residues 311-324 (QTLTYALKRSFKEL) are Cytoplasmic-facing. A helical membrane pass occupies residues 325–345 (GLLLMYLAVGIFVFSALGYTM). Residues 358–378 (PQSFWWAIITMTTVGYGDIYP) constitute an intramembrane region (pore-forming). Residues 370–375 (TVGYGD) carry the Selectivity filter motif. Residues 386-406 (NAAISFLCGVIAIALPIHPII) traverse the membrane as a helical segment. The Cytoplasmic segment spans residues 407–494 (NNFVRYYNKQ…HHRTRLQSCK (88 aa)). Positions 433–469 (NSSSGGEGKTGGSRSDLDNLPPEPAGKEAPSCSSRLK) are disordered.

Belongs to the potassium channel family. F (TC 1.A.1.2) subfamily. Kv5.1/KCNF1 sub-subfamily. In terms of assembly, heterotetramer with KCNB1 or KCNB2. In terms of tissue distribution, detected in heart, brain, liver, skeletal muscle, kidney and pancreas.

It localises to the cell membrane. In terms of biological role, regulatory alpha-subunit of the voltage-gated potassium (Kv) channel which, when coassembled with KCNB1 or KCNB2, can modulate their expression and their gating kinetics by acting on deactivation upon repolarization and inactivation during maintained depolarization. Accelerates inactivation but has relatively little effect on deactivation. Coexpression with KCNB1 or KCNB2 markedly slows inactivation. Each modulatory subunit has its own specific properties of regulation, and can lead to extensive inhibitions, to large changes in kinetics, and/or to large shifts in the voltage dependencies of the inactivation process. The gating kinetics depends on the nature and stoichiometry of the associated regulatory sunbunit. Fails to produce a potassium current when expressed alone. The polypeptide is Voltage-gated potassium channel regulatory subunit KCNF1 (Homo sapiens (Human)).